A 111-amino-acid chain; its full sequence is Nucleoid-associated protein Fphi_0115 (111 aa).

The segment at 1–27 is disordered; the sequence is MNFDMSKLMQQAQKMQEQMKKAQQERE. Over residues 17–27 the composition is skewed to basic and acidic residues; that stretch reads EQMKKAQQERE.

It belongs to the YbaB/EbfC family. Homodimer.

It localises to the cytoplasm. The protein resides in the nucleoid. Functionally, binds to DNA and alters its conformation. May be involved in regulation of gene expression, nucleoid organization and DNA protection. The chain is Nucleoid-associated protein Fphi_0115 from Francisella philomiragia subsp. philomiragia (strain ATCC 25017 / CCUG 19701 / FSC 153 / O#319-036).